Here is a 35-residue protein sequence, read N- to C-terminus: Trypsin inhibitor 1 (35 aa).

Disulfide bonds link C2-C19, C9-C23, and C18-C34.

In terms of biological role, trypsin inhibitor. This Spinacia oleracea (Spinach) protein is Trypsin inhibitor 1.